The following is a 305-amino-acid chain: MDNTELIEYFKSQIKEDPDMASAVAAIRTLLEYLRRDTGETIQGLRANLTSAIETLCGVDSSVAVSSGGELFLRFISLTSLEYSDYSKCKKIMIERGEIFLRRISLSRNKIADLCHTFIKDGARILTHAYSRVVLRVLEAAVAAKKRFSVYITESQPDLSGKKMAKALCHLNVPVTVVLDAAVGYIMEKVDLVIVGAEGVVENGGIINKIGTNQMAVCAKAQNKPFYVVAESFKFVRLFPLNQQDVPDKFKYKADTLKSVQTGQDLREEHPWVDYTSPSLITLLFTDLGVLTPSAVSDELIKLYL.

This sequence belongs to the eIF-2B alpha/beta/delta subunits family. As to quaternary structure, component of the translation initiation factor 2B (eIF2B) complex which is a heterodecamer of two sets of five different subunits: alpha, beta, gamma, delta and epsilon. Subunits alpha, beta and delta comprise a regulatory subcomplex and subunits epsilon and gamma comprise a catalytic subcomplex. Within the complex, the hexameric regulatory complex resides at the center, with the two heterodimeric catalytic subcomplexes bound on opposite sides.

The protein resides in the cytoplasm. It is found in the cytosol. Its activity is regulated as follows. Activated by the chemical integrated stress response (ISR) inhibitor ISRIB which stimulates guanine nucleotide exchange factor activity for both phosphorylated and unphosphorylated eIF2. Acts as a component of the translation initiation factor 2B (eIF2B) complex, which catalyzes the exchange of GDP for GTP on eukaryotic initiation factor 2 (eIF2) gamma subunit. Its guanine nucleotide exchange factor activity is repressed when bound to eIF2 complex phosphorylated on the alpha subunit, thereby limiting the amount of methionyl-initiator methionine tRNA available to the ribosome and consequently global translation is repressed. This Bos taurus (Bovine) protein is Translation initiation factor eIF2B subunit alpha (EIF2B1).